The following is a 226-amino-acid chain: Nucleoside triphosphate pyrophosphatase (226 aa).

D79 serves as the catalytic Proton acceptor. The segment at 204–226 (WSRGTSTHPTPGTSATPKPNPGA) is disordered. Residues 206–220 (RGTSTHPTPGTSATP) show a composition bias toward polar residues.

It belongs to the Maf family. A divalent metal cation is required as a cofactor.

It is found in the cytoplasm. It carries out the reaction a ribonucleoside 5'-triphosphate + H2O = a ribonucleoside 5'-phosphate + diphosphate + H(+). It catalyses the reaction a 2'-deoxyribonucleoside 5'-triphosphate + H2O = a 2'-deoxyribonucleoside 5'-phosphate + diphosphate + H(+). Nucleoside triphosphate pyrophosphatase. May have a dual role in cell division arrest and in preventing the incorporation of modified nucleotides into cellular nucleic acids. In Salinispora tropica (strain ATCC BAA-916 / DSM 44818 / JCM 13857 / NBRC 105044 / CNB-440), this protein is Nucleoside triphosphate pyrophosphatase.